A 185-amino-acid chain; its full sequence is uncharacterized protein (185 aa).

In terms of domain architecture, Nudix hydrolase spans 39 to 177; that stretch reads LWHASAGVLV…SWPFVPDSRA (139 aa). A Nudix box motif is present at residues 77 to 99; it reads GGVVDPGETPQETAIREVGEELG. Mg(2+) is bound by residues E93 and E97.

This sequence belongs to the Nudix hydrolase family. The cofactor is Mg(2+).

This is an uncharacterized protein from Rhodococcus erythropolis (Arthrobacter picolinophilus).